The chain runs to 167 residues: G/U mismatch-specific DNA glycosylase (167 aa).

It belongs to the uracil-DNA glycosylase (UDG) superfamily. TDG/mug family. Binds DNA as a monomer.

It is found in the cytoplasm. The enzyme catalyses Specifically hydrolyzes mismatched double-stranded DNA and polynucleotides, releasing free uracil.. Functionally, excises ethenocytosine and uracil, which can arise by alkylation or deamination of cytosine, respectively, from the corresponding mispairs with guanine in ds-DNA. It is capable of hydrolyzing the carbon-nitrogen bond between the sugar-phosphate backbone of the DNA and the mispaired base. The complementary strand guanine functions in substrate recognition. Required for DNA damage lesion repair in stationary-phase cells. The sequence is that of G/U mismatch-specific DNA glycosylase from Pectobacterium carotovorum subsp. carotovorum (strain PC1).